Consider the following 92-residue polypeptide: Small ribosomal subunit protein uS19c (92 aa).

Belongs to the universal ribosomal protein uS19 family.

Its subcellular location is the plastid. The protein localises to the chloroplast. Its function is as follows. Protein S19 forms a complex with S13 that binds strongly to the 16S ribosomal RNA. The sequence is that of Small ribosomal subunit protein uS19c from Huperzia lucidula (Shining clubmoss).